The following is a 355-amino-acid chain: Holliday junction branch migration complex subunit RuvB (355 aa).

The tract at residues 1 to 193 (MGRFSEDSAD…FGFTAHMDFY (193 aa)) is large ATPase domain (RuvB-L). Residues Leu-32, Arg-33, Gly-74, Lys-77, Thr-78, Ser-79, 140 to 142 (EDF), Arg-183, Tyr-193, and Arg-230 contribute to the ATP site. Mg(2+) is bound at residue Thr-78. The segment at 194–264 (EPSELERVLA…IAKYALEVYD (71 aa)) is small ATPAse domain (RuvB-S). The interval 267 to 355 (ELGLDRLDRA…VGLGQTGLFD (89 aa)) is head domain (RuvB-H). Arg-322 and Arg-327 together coordinate DNA.

This sequence belongs to the RuvB family. Homohexamer. Forms an RuvA(8)-RuvB(12)-Holliday junction (HJ) complex. HJ DNA is sandwiched between 2 RuvA tetramers; dsDNA enters through RuvA and exits via RuvB. An RuvB hexamer assembles on each DNA strand where it exits the tetramer. Each RuvB hexamer is contacted by two RuvA subunits (via domain III) on 2 adjacent RuvB subunits; this complex drives branch migration. In the full resolvosome a probable DNA-RuvA(4)-RuvB(12)-RuvC(2) complex forms which resolves the HJ.

It localises to the cytoplasm. It catalyses the reaction ATP + H2O = ADP + phosphate + H(+). In terms of biological role, the RuvA-RuvB-RuvC complex processes Holliday junction (HJ) DNA during genetic recombination and DNA repair, while the RuvA-RuvB complex plays an important role in the rescue of blocked DNA replication forks via replication fork reversal (RFR). RuvA specifically binds to HJ cruciform DNA, conferring on it an open structure. The RuvB hexamer acts as an ATP-dependent pump, pulling dsDNA into and through the RuvAB complex. RuvB forms 2 homohexamers on either side of HJ DNA bound by 1 or 2 RuvA tetramers; 4 subunits per hexamer contact DNA at a time. Coordinated motions by a converter formed by DNA-disengaged RuvB subunits stimulates ATP hydrolysis and nucleotide exchange. Immobilization of the converter enables RuvB to convert the ATP-contained energy into a lever motion, pulling 2 nucleotides of DNA out of the RuvA tetramer per ATP hydrolyzed, thus driving DNA branch migration. The RuvB motors rotate together with the DNA substrate, which together with the progressing nucleotide cycle form the mechanistic basis for DNA recombination by continuous HJ branch migration. Branch migration allows RuvC to scan DNA until it finds its consensus sequence, where it cleaves and resolves cruciform DNA. The protein is Holliday junction branch migration complex subunit RuvB of Mycolicibacterium vanbaalenii (strain DSM 7251 / JCM 13017 / BCRC 16820 / KCTC 9966 / NRRL B-24157 / PYR-1) (Mycobacterium vanbaalenii).